The sequence spans 86 residues: UPF0335 protein BR1752/BS1330_I1746 (86 aa).

The protein belongs to the UPF0335 family.

This is UPF0335 protein BR1752/BS1330_I1746 from Brucella suis biovar 1 (strain 1330).